We begin with the raw amino-acid sequence, 267 residues long: Soluble interferon gamma receptor OPG193 (267 aa).

The N-terminal stretch at 1–17 (MRYIIILAVLFINSIHA) is a signal peptide. Residues asparagine 42 and asparagine 150 are each glycosylated (N-linked (GlcNAc...) asparagine; by host).

It belongs to the type II cytokine receptor family. As to quaternary structure, homodimer. Interacts with host IFNG.

The protein localises to the secreted. Functionally, counteracts the antiviral effects of host IFN-gamma. Acts as a soluble IFN-gamma receptor and thus inhibits the interaction between host IFN-gamma and its receptor. The sequence is that of Soluble interferon gamma receptor OPG193 (OPG193) from Cynomys gunnisoni (Gunnison's prairie dog).